The following is a 535-amino-acid chain: MWRADRWAPLLLFLLQSALGRPRLAPPRNVTLFSQNFTVYLTWLPGLGSPPNVTYFVTYQSYIKTGWRPVEHCAGIKALVCPLMCLKKLNLYSKFKGRVQAASAHGRSPRVESRYLEYLFDVELAPPTLVLTQMEKILRVNATYQLPPCMPSLELKYQVEFWKEGLGSKTLFPDTPYGQPVQIPLQQGASRRHCLSARTVYTLIDIKYSQFSEPSCIFLEAPGDKRAVLAMPSLLLLLIAAVAAGVAWKIMKGNPWFQGVKTPRALDFSEYRYPVATFQPSGPEFSDDLILCPQKELTIRNRPAPQVRNPATLQAGPERDSTEDEDEDTDYDDDGDSVQPYLERPLFISEKPRVMEHSETDESGVDSGGPWTSPVGSDGSSAWDSSDRSWSSTGDSSYKDEVGSSSCLDRKEPDQAPCGDWLQEALPCLEFSEDLGTVEEPLKDGLSGWRISGSLSSKRDLAPVEPPVSLQTLTFCWVNNPEGEEEQEDEEEEEEEEEEEDWESEPKGSNAGCWGTSSVQRTEVRGRMLGDYLVR.

A signal peptide spans 1-20 (MWRADRWAPLLLFLLQSALG). The Extracellular portion of the chain corresponds to 21-227 (RPRLAPPRNV…FLEAPGDKRA (207 aa)). The region spanning 26–121 (PPRNVTLFSQ…ESRYLEYLFD (96 aa)) is the Fibronectin type-III domain. Residues asparagine 29, asparagine 36, and asparagine 52 are each glycosylated (N-linked (GlcNAc...) asparagine). Cystine bridges form between cysteine 73-cysteine 81, cysteine 85-cysteine 149, and cysteine 194-cysteine 216. Asparagine 141 carries N-linked (GlcNAc...) asparagine glycosylation. A helical transmembrane segment spans residues 228–248 (VLAMPSLLLLLIAAVAAGVAW). Topologically, residues 249-535 (KIMKGNPWFQ…GRMLGDYLVR (287 aa)) are cytoplasmic. 2 disordered regions span residues 301 to 419 (NRPA…APCG) and 478 to 520 (VNNP…SSVQ). Acidic residues predominate over residues 321–336 (STEDEDEDTDYDDDGD). Over residues 350-360 (EKPRVMEHSET) the composition is skewed to basic and acidic residues. Residues 376-396 (GSDGSSAWDSSDRSWSSTGDS) show a composition bias toward low complexity. The segment covering 397–414 (SYKDEVGSSSCLDRKEPD) has biased composition (basic and acidic residues). Acidic residues predominate over residues 482-503 (EGEEEQEDEEEEEEEEEEEDWE).

The protein belongs to the type II cytokine receptor family. As to quaternary structure, heterodimer with IL10RB. Ubiquitinated by FBXO45-containing E3 ligase leading to proteasomal degradation.

The protein localises to the membrane. The IFNLR1/IL10RB dimer is a receptor for the cytokine ligands IFNL2 and IFNL3 and mediates their antiviral activity. The ligand/receptor complex stimulate the activation of the JAK/STAT signaling pathway leading to the expression of IFN-stimulated genes (ISG), which contribute to the antiviral state. Determines the cell type specificity of the lambda interferon action. Shows a more restricted pattern of expression in the epithelial tissues thereby limiting responses to lambda interferons primarily to epithelial cells of the respiratory, gastrointestinal, and reproductive tracts. Seems not to be essential for early virus-activated host defense in vaginal infection, but plays an important role in Toll-like receptor (TLR)-induced antiviral defense. Plays a significant role in the antiviral immune defense in the intestinal epithelium. This is Interferon lambda receptor 1 (Ifnlr1) from Mus musculus (Mouse).